The primary structure comprises 255 residues: Ribosomal RNA small subunit methyltransferase G (255 aa).

Residues glycine 89, phenylalanine 94, 112 to 114 (DST), 140 to 141 (VE), and arginine 159 contribute to the S-adenosyl-L-methionine site.

This sequence belongs to the methyltransferase superfamily. RNA methyltransferase RsmG family.

The protein localises to the cytoplasm. Functionally, specifically methylates the N7 position of a guanine in 16S rRNA. The chain is Ribosomal RNA small subunit methyltransferase G from Trichodesmium erythraeum (strain IMS101).